A 316-amino-acid polypeptide reads, in one-letter code: Transaldolase (316 aa).

Residue Lys-132 is the Schiff-base intermediate with substrate of the active site.

Belongs to the transaldolase family. Type 1 subfamily. In terms of assembly, homodimer.

The protein resides in the cytoplasm. The catalysed reaction is D-sedoheptulose 7-phosphate + D-glyceraldehyde 3-phosphate = D-erythrose 4-phosphate + beta-D-fructose 6-phosphate. Its pathway is carbohydrate degradation; pentose phosphate pathway; D-glyceraldehyde 3-phosphate and beta-D-fructose 6-phosphate from D-ribose 5-phosphate and D-xylulose 5-phosphate (non-oxidative stage): step 2/3. Transaldolase is important for the balance of metabolites in the pentose-phosphate pathway. This is Transaldolase from Vibrio parahaemolyticus serotype O3:K6 (strain RIMD 2210633).